The following is a 968-amino-acid chain: MPFTLGQRWISDTESELGLGTVVAMDARTVTLLFPSTGENRLYARSDSPVTRVMFNPGDTITSHEGWQLHIDEVKEENGLLAYVGTRLDTEETNVTLREVLLDSKLVFSKPQDRLFAGQIDRMDRFALRYRARKFQSEQYRMPYSGLRGQRTNLIPHQLNIAHDVGRRHAPRVLLADEVGLGKTIEAGMILHQQLLSGAAERVLIIVPETLQHQWLVEMLRRFNLRFALFDDERYTEAQHDAYNPFETEQLVICSLDFARRNKQRLEHLCDAEWDLLVVDEAHHLVWSIDAPSREYMAIEQLAERVPGVLLLTATPEQLGMESHFARLRLLDPNRFHDFAQFVEEQKNYRPVADAVAMLLAGNKLSNDELNRLGDLIGEQDIEPLLQAANSDRDDAQAARQELVSMLMDRHGTSRVLFRNTRNGVKGFPKRELHTVKLPLPTQYQTAIKVSGIMGARKSAEDRARDMLYPEQIYQEFEGDTGTWWNFDPRVEWLMGYLTSHRSQKVLVICAKATTALQLEQVLREREGIRAAVFHEGMSIIERDRAAAWFAEEDTGAQVLLCSEIGSEGRNFQFASNLVMFDLPFNPDLLEQRIGRLDRIGQAHDIQIHVPYLEKTAQSVLVRWYHEGLDAFEHTCPTGRAIYDSAYASLINYLGAPEETDGFDDLITSCREQHEALKAQLEQGRDRLLEIHSNGGEKAQQLAQSIEEQDDDTSLIAFAMNLFDIIGINQDDRGDNLIVLTPSDHMLVPDFPGLPEDGCTITFERDVALSREDAQFITWEHPLIRNGLDLILSGDTGSSTISLLKNKALPVGTLLVELIYVVEAQAPKQLQLNRFLPPTPVRMLLDKNGNNLAAQVEFETFNRQLSAVNRHTGSKLVNAVQQDVHAILQLGETQIEKSARALIDNARREADEKLSGELSRLEALRAVNPNIRDDELAAIDSNRQQVLESLNQASWRLDALRLIVVTHQ.

The Helicase ATP-binding domain maps to 164-334 (DVGRRHAPRV…FARLRLLDPN (171 aa)). 177–184 (DEVGLGKT) contacts ATP. Positions 280–283 (DEAH) match the DEAH box motif. The Helicase C-terminal domain maps to 490 to 644 (RVEWLMGYLT…TCPTGRAIYD (155 aa)).

This sequence belongs to the SNF2/RAD54 helicase family. RapA subfamily. In terms of assembly, interacts with the RNAP. Has a higher affinity for the core RNAP than for the holoenzyme. Its ATPase activity is stimulated by binding to RNAP.

Its function is as follows. Transcription regulator that activates transcription by stimulating RNA polymerase (RNAP) recycling in case of stress conditions such as supercoiled DNA or high salt concentrations. Probably acts by releasing the RNAP, when it is trapped or immobilized on tightly supercoiled DNA. Does not activate transcription on linear DNA. Probably not involved in DNA repair. This is RNA polymerase-associated protein RapA from Salmonella arizonae (strain ATCC BAA-731 / CDC346-86 / RSK2980).